A 354-amino-acid polypeptide reads, in one-letter code: Chorismate synthase (354 aa).

Arg46 lines the NADP(+) pocket. FMN-binding positions include 123–125 (RSS), 239–240 (NA), Gly284, 299–303 (KPVAT), and Arg325.

This sequence belongs to the chorismate synthase family. In terms of assembly, homotetramer. FMNH2 is required as a cofactor.

It catalyses the reaction 5-O-(1-carboxyvinyl)-3-phosphoshikimate = chorismate + phosphate. Its pathway is metabolic intermediate biosynthesis; chorismate biosynthesis; chorismate from D-erythrose 4-phosphate and phosphoenolpyruvate: step 7/7. In terms of biological role, catalyzes the anti-1,4-elimination of the C-3 phosphate and the C-6 proR hydrogen from 5-enolpyruvylshikimate-3-phosphate (EPSP) to yield chorismate, which is the branch point compound that serves as the starting substrate for the three terminal pathways of aromatic amino acid biosynthesis. This reaction introduces a second double bond into the aromatic ring system. The sequence is that of Chorismate synthase from Azobacteroides pseudotrichonymphae genomovar. CFP2.